A 466-amino-acid polypeptide reads, in one-letter code: Ribulose bisphosphate carboxylase large chain (466 aa).

K5 bears the N6,N6,N6-trimethyllysine mark. Substrate-binding residues include N114 and T164. K166 acts as the Proton acceptor in catalysis. K168 serves as a coordination point for substrate. K192, D194, and E195 together coordinate Mg(2+). K192 bears the N6-carboxylysine mark. The active-site Proton acceptor is the H285. Substrate is bound by residues R286, H318, and S370.

Belongs to the RuBisCO large chain family. Type I subfamily. Heterohexadecamer of 8 large chains and 8 small chains; disulfide-linked. The disulfide link is formed within the large subunit homodimers. The cofactor is Mg(2+). The disulfide bond which can form in the large chain dimeric partners within the hexadecamer appears to be associated with oxidative stress and protein turnover.

Its subcellular location is the plastid. It is found in the chloroplast. It catalyses the reaction 2 (2R)-3-phosphoglycerate + 2 H(+) = D-ribulose 1,5-bisphosphate + CO2 + H2O. The enzyme catalyses D-ribulose 1,5-bisphosphate + O2 = 2-phosphoglycolate + (2R)-3-phosphoglycerate + 2 H(+). Its function is as follows. RuBisCO catalyzes two reactions: the carboxylation of D-ribulose 1,5-bisphosphate, the primary event in carbon dioxide fixation, as well as the oxidative fragmentation of the pentose substrate in the photorespiration process. Both reactions occur simultaneously and in competition at the same active site. The polypeptide is Ribulose bisphosphate carboxylase large chain (Cercidiphyllum japonicum (Katsura tree)).